A 662-amino-acid chain; its full sequence is Protein translocase subunit SecA 2 (662 aa).

Residues Gln-110, 128 to 132 (GEGKT), and Asp-538 contribute to the ATP site.

The protein belongs to the SecA family. Monomer and homodimer. Part of the essential Sec protein translocation apparatus which comprises SecA, SecYEG and auxiliary proteins SecDF. Other proteins may also be involved.

Its subcellular location is the cell inner membrane. The protein localises to the cytoplasm. It carries out the reaction ATP + H2O + cellular proteinSide 1 = ADP + phosphate + cellular proteinSide 2.. In terms of biological role, part of the Sec protein translocase complex. Interacts with the SecYEG preprotein conducting channel. Has a central role in coupling the hydrolysis of ATP to the transfer of proteins into and across the cell membrane, serving as an ATP-driven molecular motor driving the stepwise translocation of polypeptide chains across the membrane. This chain is Protein translocase subunit SecA 2, found in Chlorobium chlorochromatii (strain CaD3).